The following is a 342-amino-acid chain: MLDLYRRTVARFPLGSVSYMFAYGSGVKQQEGYGKVGNGNNLRPPPGTVVDLVFCVRDARGFHAENLHRHPDHYSALRHLGPNFVAKYQERLGAGVYCNTLVPLPDVGITIKYGVVSQEELLEDLLDWRHLYLAGRLHKPVTNLVNPSDNPPLKAALERNLVSALQVALLLLPEKFTAYGLFHTIAGLSYKGDFRMIFGENKQKVHNIVSPQINDFFALYQPSLGQLSDYVAVNMKGQEPGSRKPAIIFEQDKSSSATCQHLRQLPRELQKRLQRNAACRGDYTQVVNHLSMASQLPEVLQASVNDIVWRSSVTQSIKNIPSAGILKSLAYSYRKAQKTFAV.

It belongs to the TAM41 family. Requires Mg(2+) as cofactor. It depends on Co(2+) as a cofactor. Cu(2+) is required as a cofactor.

The protein localises to the mitochondrion inner membrane. It carries out the reaction a 1,2-diacyl-sn-glycero-3-phosphate + CTP + H(+) = a CDP-1,2-diacyl-sn-glycerol + diphosphate. The protein operates within phospholipid metabolism; CDP-diacylglycerol biosynthesis; CDP-diacylglycerol from sn-glycerol 3-phosphate: step 3/3. Its function is as follows. Catalyzes the formation of CDP-diacylglycerol (CDP-DAG) from phosphatidic acid (PA) in the mitochondrial inner membrane. Required for the biosynthesis of the dimeric phospholipid cardiolipin, which stabilizes supercomplexes of the mitochondrial respiratory chain in the mitochondrial inner membrane. The protein is Phosphatidate cytidylyltransferase, mitochondrial of Drosophila melanogaster (Fruit fly).